The following is a 596-amino-acid chain: Elongation factor 4 (596 aa).

The region spanning 2–184 is the tr-type G domain; the sequence is KHIRNFSIIA…VIVEQIPPPE (183 aa). GTP contacts are provided by residues 14–19 and 131–134; these read DHGKST and NKID.

This sequence belongs to the TRAFAC class translation factor GTPase superfamily. Classic translation factor GTPase family. LepA subfamily.

Its subcellular location is the cell inner membrane. It catalyses the reaction GTP + H2O = GDP + phosphate + H(+). Required for accurate and efficient protein synthesis under certain stress conditions. May act as a fidelity factor of the translation reaction, by catalyzing a one-codon backward translocation of tRNAs on improperly translocated ribosomes. Back-translocation proceeds from a post-translocation (POST) complex to a pre-translocation (PRE) complex, thus giving elongation factor G a second chance to translocate the tRNAs correctly. Binds to ribosomes in a GTP-dependent manner. This is Elongation factor 4 from Shewanella oneidensis (strain ATCC 700550 / JCM 31522 / CIP 106686 / LMG 19005 / NCIMB 14063 / MR-1).